The primary structure comprises 388 residues: Succinate--CoA ligase [ADP-forming] subunit beta (388 aa).

The ATP-grasp domain occupies 9–244; it reads KAIFRSMGVA…LEEEDPKEIE (236 aa). ATP is bound by residues K46, 53–55, E99, C102, and E107; that span reads GRG. Positions 199 and 213 each coordinate Mg(2+). Residues N264 and 321–323 contribute to the substrate site; that span reads GIM.

It belongs to the succinate/malate CoA ligase beta subunit family. In terms of assembly, heterotetramer of two alpha and two beta subunits. Mg(2+) serves as cofactor.

It carries out the reaction succinate + ATP + CoA = succinyl-CoA + ADP + phosphate. The enzyme catalyses GTP + succinate + CoA = succinyl-CoA + GDP + phosphate. It functions in the pathway carbohydrate metabolism; tricarboxylic acid cycle; succinate from succinyl-CoA (ligase route): step 1/1. Functionally, succinyl-CoA synthetase functions in the citric acid cycle (TCA), coupling the hydrolysis of succinyl-CoA to the synthesis of either ATP or GTP and thus represents the only step of substrate-level phosphorylation in the TCA. The beta subunit provides nucleotide specificity of the enzyme and binds the substrate succinate, while the binding sites for coenzyme A and phosphate are found in the alpha subunit. In Staphylococcus saprophyticus subsp. saprophyticus (strain ATCC 15305 / DSM 20229 / NCIMB 8711 / NCTC 7292 / S-41), this protein is Succinate--CoA ligase [ADP-forming] subunit beta.